The sequence spans 610 residues: All-trans-retinol 13,14-reductase (610 aa).

The first 18 residues, 1-18 (MWLPLVLLLAVLLLAVLC), serve as a signal peptide directing secretion.

The protein belongs to the carotenoid/retinoid oxidoreductase family. CrtISO subfamily. Requires NAD(+) as cofactor. NADP(+) serves as cofactor. The cofactor is FAD. In terms of tissue distribution, expressed in liver; expression positively correlates with obesity and liver steatosis. Expressed in adipose tissue; expression tends to be decreased in obese versus lean individuals.

The protein localises to the endoplasmic reticulum membrane. It catalyses the reaction all-trans-13,14-dihydroretinol + A = all-trans-retinol + AH2. In terms of biological role, catalyzes the saturation of all-trans-retinol to all-trans-13,14-dihydroretinol. Does not exhibit any activity toward all-trans-retinoic acid, nor 9-cis, 11-cis or 13-cis-retinol isomers. May play a role in the metabolism of vitamin A. Independently of retinol conversion, may regulate liver metabolism upstream of MLXIPL/ChREBP. May play a role in adipocyte differentiation. The sequence is that of All-trans-retinol 13,14-reductase (RETSAT) from Homo sapiens (Human).